The primary structure comprises 191 residues: Peptide methionine sulfoxide reductase MsrA (191 aa).

Cysteine 21 is a catalytic residue.

This sequence belongs to the MsrA Met sulfoxide reductase family.

It carries out the reaction L-methionyl-[protein] + [thioredoxin]-disulfide + H2O = L-methionyl-(S)-S-oxide-[protein] + [thioredoxin]-dithiol. The enzyme catalyses [thioredoxin]-disulfide + L-methionine + H2O = L-methionine (S)-S-oxide + [thioredoxin]-dithiol. Its function is as follows. Has an important function as a repair enzyme for proteins that have been inactivated by oxidation. Catalyzes the reversible oxidation-reduction of methionine sulfoxide in proteins to methionine. The chain is Peptide methionine sulfoxide reductase MsrA from Ralstonia nicotianae (strain ATCC BAA-1114 / GMI1000) (Ralstonia solanacearum).